A 241-amino-acid chain; its full sequence is Small ribosomal subunit protein uS2 (241 aa).

It belongs to the universal ribosomal protein uS2 family.

The sequence is that of Small ribosomal subunit protein uS2 from Yersinia enterocolitica serotype O:8 / biotype 1B (strain NCTC 13174 / 8081).